The primary structure comprises 786 residues: m7GpppN-mRNA hydrolase dcap-2 (786 aa).

Positions 25 to 61 (QKQNKSTEEPPSSVQKLLASLQQAQNKSDLSEQPSTS) are enriched in polar residues. The segment at 25–148 (QKQNKSTEEP…QQQQQYKGPR (124 aa)) is disordered. A compositionally biased stretch (basic residues) spans 62–72 (KPKKNEKRKKA). Composition is skewed to polar residues over residues 101–111 (MQQQAENARIS) and 118–133 (QVSTSKGSSRNTTAPE). Positions 134 to 144 (QQNYQQQQQQY) are enriched in low complexity. One can recognise a Nudix hydrolase domain in the interval 238-366 (STVPTYGAIL…LPAYLQGNKF (129 aa)). A Nudix box motif is present at residues 273-294 (GKINQAEPPRDAAIRETFEETG). Glutamate 288 and glutamate 292 together coordinate Mg(2+). Disordered regions lie at residues 556 to 576 (IMHSPNHPLPPTSNSPATPTA) and 623 to 655 (ISSTQKQSIPKATAAPPSTEKTRSASLSGSSQV). Composition is skewed to polar residues over residues 623–632 (ISSTQKQSIP) and 646–655 (SASLSGSSQV).

The protein belongs to the Nudix hydrolase family. DCP2 subfamily. As to quaternary structure, may be a component of the decapping complex composed of dcap-1 and dcap-2. The cofactor is Mg(2+). Mn(2+) serves as cofactor. In terms of tissue distribution, expressed in sensory neurons.

The protein resides in the cytoplasmic granule. The protein localises to the cytoplasm. It localises to the perinuclear region. The enzyme catalyses a 5'-end (N(7)-methyl 5'-triphosphoguanosine)-ribonucleoside in mRNA + H2O = N(7)-methyl-GDP + a 5'-end phospho-ribonucleoside in mRNA + 2 H(+). It catalyses the reaction a 5'-end (N(2),N(2),N(7)-trimethyl 5'-triphosphoguanosine)-ribonucleoside in mRNA + H2O = N(2),N(2),N(7)-trimethyl-GDP + a 5'-end phospho-ribonucleoside in mRNA + 2 H(+). Inhibited by capped and uncapped RNA. Not inhibited by dinucleotide cap or methylated nucleotide analogs. In terms of biological role, decapping metalloenzyme that catalyzes the cleavage of the cap structure on mRNAs. Removes the 7-methyl guanine cap structure from mRNA molecules, yielding a 5'-phosphorylated mRNA fragment and 7m-GDP. RNA-decapping enzyme although it does not bind the RNA cap. May contribute to gene regulation in multiple RNA pathways including monomethylguanosine- and trimethylguanosine-capped RNAs. In oocytes, may play a role in the response to stress induced by heat shock, osmotic stress and anoxia. Required for the developmental axon guidance and regrowth of PLM touch receptor neurons. Early in embryogenesis, plays a role in ciliary shape formation in sensory neurons. Promotes survival at high temperatures. The chain is m7GpppN-mRNA hydrolase dcap-2 from Caenorhabditis elegans.